A 337-amino-acid chain; its full sequence is HTH-type transcriptional repressor PurR (337 aa).

The region spanning 2-56 (ATIKDVAKLAAVSTTTVSHVINKTRFVAEATQKRVWEAVEELNYAPSAVARSLKC) is the HTH lacI-type domain. Positions 4 to 23 (IKDVAKLAAVSTTTVSHVIN) form a DNA-binding region, H-T-H motif. Residues 48–56 (SAVARSLKC) mediate DNA binding. Residues Phe73, Lys189, Thr191, Phe220, and Asp276 each coordinate hypoxanthine.

Homodimer.

It functions in the pathway purine metabolism; purine nucleotide biosynthesis [regulation]. Functionally, is the main repressor of the genes involved in the de novo synthesis of purine nucleotides, regulating purB, purC, purEK, purF, purHD, purL, purMN and guaBA expression. PurR is allosterically activated to bind its cognate DNA by binding the purine corepressors, hypoxanthine or guanine, thereby effecting transcription repression. This Aliivibrio fischeri (strain ATCC 700601 / ES114) (Vibrio fischeri) protein is HTH-type transcriptional repressor PurR.